A 727-amino-acid chain; its full sequence is ATP-dependent RNA helicase Ddx1 (727 aa).

A Helicase ATP-binding domain is found at 2–428; it reads TAFEEFGVLP…AERLMHFPTW (427 aa). 46 to 53 lines the ATP pocket; it reads AETGSGKT. Residues 69-246 form the B30.2/SPRY domain; the sequence is RDLEEGKAGK…MQFNFGKTDF (178 aa). Residues 370 to 373 carry the DEAD box motif; that stretch reads DEAD. In terms of domain architecture, Helicase C-terminal spans 483-676; it reads TLSQAVKLLK…QVDKTMDVPV (194 aa).

The protein belongs to the DEAD box helicase family. DDX1 subfamily.

It catalyses the reaction ATP + H2O = ADP + phosphate + H(+). Functionally, acts as an ATP-dependent RNA helicase, able to unwind both RNA-RNA and RNA-DNA duplexes. Possesses 5' single-stranded RNA overhang nuclease activity. The sequence is that of ATP-dependent RNA helicase Ddx1 (Ddx1) from Drosophila melanogaster (Fruit fly).